A 349-amino-acid chain; its full sequence is Fe(3+) ions import ATP-binding protein FbpC (349 aa).

The 231-residue stretch at L7–M237 folds into the ABC transporter domain. G39–T46 contacts ATP.

Belongs to the ABC transporter superfamily. Fe(3+) ion importer (TC 3.A.1.10) family. In terms of assembly, the complex is composed of two ATP-binding proteins (FbpC), two transmembrane proteins (FbpB) and a solute-binding protein (FbpA).

It localises to the cell inner membrane. The enzyme catalyses Fe(3+)(out) + ATP + H2O = Fe(3+)(in) + ADP + phosphate + H(+). In terms of biological role, part of the ABC transporter complex FbpABC involved in Fe(3+) ions import. Responsible for energy coupling to the transport system. This chain is Fe(3+) ions import ATP-binding protein FbpC, found in Pasteurella multocida (strain Pm70).